A 311-amino-acid chain; its full sequence is Aspartate carbamoyltransferase catalytic subunit (311 aa).

Positions 55 and 56 each coordinate carbamoyl phosphate. L-aspartate is bound at residue Lys85. Residues Arg106, His135, and Gln138 each contribute to the carbamoyl phosphate site. Positions 168 and 230 each coordinate L-aspartate. Carbamoyl phosphate contacts are provided by Leu268 and Pro269.

It belongs to the aspartate/ornithine carbamoyltransferase superfamily. ATCase family. In terms of assembly, heterododecamer (2C3:3R2) of six catalytic PyrB chains organized as two trimers (C3), and six regulatory PyrI chains organized as three dimers (R2).

The enzyme catalyses carbamoyl phosphate + L-aspartate = N-carbamoyl-L-aspartate + phosphate + H(+). It functions in the pathway pyrimidine metabolism; UMP biosynthesis via de novo pathway; (S)-dihydroorotate from bicarbonate: step 2/3. In terms of biological role, catalyzes the condensation of carbamoyl phosphate and aspartate to form carbamoyl aspartate and inorganic phosphate, the committed step in the de novo pyrimidine nucleotide biosynthesis pathway. This is Aspartate carbamoyltransferase catalytic subunit from Salmonella arizonae (strain ATCC BAA-731 / CDC346-86 / RSK2980).